Here is a 156-residue protein sequence, read N- to C-terminus: FAD synthase (156 aa).

Residues 9 to 10 (TF), 14 to 17 (HPGH), Asn92, and His119 each bind ATP.

Belongs to the archaeal FAD synthase family. As to quaternary structure, homodimer. A divalent metal cation is required as a cofactor.

It carries out the reaction FMN + ATP + H(+) = FAD + diphosphate. It functions in the pathway cofactor biosynthesis; FAD biosynthesis; FAD from FMN: step 1/1. In terms of biological role, catalyzes the transfer of the AMP portion of ATP to flavin mononucleotide (FMN) to produce flavin adenine dinucleotide (FAD) coenzyme. This Methanospirillum hungatei JF-1 (strain ATCC 27890 / DSM 864 / NBRC 100397 / JF-1) protein is FAD synthase.